A 398-amino-acid polypeptide reads, in one-letter code: Small ribosomal subunit protein mS78 (rPPR3a) (398 aa).

The transit peptide at 1-19 (MSSLSRVLRGTFNTCPIRR) directs the protein to the mitochondrion. PPR repeat units lie at residues 108–142 (KEGFAARIISLYGKAGMFENAQKVFEEMPNRDCKR), 143–173 (SVLSFNALLSAYRLSKKFDVVEELFNELPGK), 179–213 (DIVSYNTLIKALCEKDSLPEAVALLDEIENKGLKP), 214–248 (DIVTFNTLLLSSYLKGQFELGEEIWAKMVEKNVAI), 249–283 (DIRTYNARLLGLANEAKSKELVNLFGELKASGLKP), 284–318 (DVFSFNAMIRGSINEGKMDEAEAWYKEIVKHGYRP), and 319–353 (DKATFALLLPAMCKAGDFESAIELFKETFSKRYLV).

The protein belongs to the PPR family. P subfamily. Component of the mitochondrial ribosome small subunit.

The protein resides in the mitochondrion. In Arabidopsis thaliana (Mouse-ear cress), this protein is Small ribosomal subunit protein mS78 (rPPR3a).